We begin with the raw amino-acid sequence, 201 residues long: Small ribosomal subunit protein uS10m (201 aa).

This sequence belongs to the universal ribosomal protein uS10 family. In terms of assembly, component of the mitochondrial small ribosomal subunit (mt-SSU). Mature mammalian 55S mitochondrial ribosomes consist of a small (28S) and a large (39S) subunit. The 28S small subunit contains a 12S ribosomal RNA (12S mt-rRNA) and 30 different proteins. The 39S large subunit contains a 16S rRNA (16S mt-rRNA), a copy of mitochondrial valine transfer RNA (mt-tRNA(Val)), which plays an integral structural role, and 52 different proteins.

The protein resides in the mitochondrion. This is Small ribosomal subunit protein uS10m (MRPS10) from Homo sapiens (Human).